Consider the following 601-residue polypeptide: Molybdenum cofactor synthesis protein cinnamon (601 aa).

Residues 3–153 (SITFGVLTIS…TISALLPHAV (151 aa)) are MPT adenylyltransferase. The segment at 173-195 (SAQKSHICPHKTGTGTDSDRNSP) is disordered. Residues 184–596 (TGTGTDSDRN…FPASVLRFDF (413 aa)) are MPT Mo-transferase. Ser-376 carries the post-translational modification Phosphoserine.

This sequence in the N-terminal section; belongs to the MoaB/Mog family. The protein in the C-terminal section; belongs to the MoeA family. Mg(2+) serves as cofactor.

It carries out the reaction molybdopterin + ATP + H(+) = adenylyl-molybdopterin + diphosphate. The enzyme catalyses adenylyl-molybdopterin + molybdate = Mo-molybdopterin + AMP + H(+). It participates in cofactor biosynthesis; molybdopterin biosynthesis. Functionally, catalyzes two steps in the biosynthesis of the molybdenum cofactor. In the first step, molybdopterin is adenylated. Subsequently, molybdate is inserted into adenylated molybdopterin and AMP is released. The protein is Molybdenum cofactor synthesis protein cinnamon (cin) of Drosophila melanogaster (Fruit fly).